The chain runs to 121 residues: MNLSYLVACGLLVTFLSDKMDAQPLTPAQQKSLRSLLGEELAEFLESGENENRLDDVRSRMRLLRDLRVDTRARGMWARLLNDQPASRRHKSGSKKGGSTSRSGCFGHKMDRIGTISGMGC.

The N-terminal stretch at 1–22 (MNLSYLVACGLLVTFLSDKMDA) is a signal peptide. A propeptide spanning residues 23-96 (QPLTPAQQKS…SRRHKSGSKK (74 aa)) is cleaved from the precursor. A disordered region spans residues 80 to 109 (LLNDQPASRRHKSGSKKGGSTSRSGCFGHK). Cys-105 and Cys-121 are joined by a disulfide.

The protein belongs to the natriuretic peptide family. In terms of tissue distribution, brain, spinal cord, spleen, heart and fin, and to a lower extent in gill and ovary.

Its subcellular location is the secreted. Functionally, exhibits natriuretic and vasodepressant activity. Has cGMP-stimulating activity. May help to regulate body fluid homeostasis in a variety of aquatic environments. The sequence is that of C-type natriuretic peptide 4 from Oryzias latipes (Japanese rice fish).